Reading from the N-terminus, the 370-residue chain is Endopolygalacturonase A (370 aa).

Residues 1 to 19 (MPSAKPLFCLATLAGAALA) form the signal peptide. Residues 20–32 (APAPSRATDFNKR) constitute a propeptide that is removed on maturation. Cysteines 35 and 50 form a disulfide. 6 PbH1 repeats span residues 162–192 (SDNL…DISE), 193–214 (STYI…AINS), 215–235 (GENI…SIGS), 244–265 (VKNV…RIKT), 273–295 (VEDI…VIEQ), and 307–352 (SNGV…DITG). The cysteines at positions 209 and 225 are disulfide-linked. The active site involves H229. N246 carries N-linked (GlcNAc...) asparagine glycosylation. Cystine bridges form between C335–C340 and C359–C368.

Belongs to the glycosyl hydrolase 28 family.

The protein resides in the secreted. The enzyme catalyses (1,4-alpha-D-galacturonosyl)n+m + H2O = (1,4-alpha-D-galacturonosyl)n + (1,4-alpha-D-galacturonosyl)m.. Functionally, involved in maceration and soft-rotting of plant tissue. Hydrolyzes the 1,4-alpha glycosidic bonds of de-esterified pectate in the smooth region of the plant cell wall. The protein is Endopolygalacturonase A (pgaA) of Aspergillus awamori (Black koji mold).